Consider the following 358-residue polypeptide: Neuronal-specific septin-3 (358 aa).

Over residues 1–10 (MSKGLPETRT) the composition is skewed to basic and acidic residues. A disordered region spans residues 1–30 (MSKGLPETRTDAAMSELVPEPRPKPAVPMK). A Septin-type G domain is found at 58–331 (TGFDFNIMVV…ETYRAKRLND (274 aa)). Residues 68 to 75 (GQSGLGKS) are G1 motif. Position 68–75 (68–75 (GQSGLGKS)) interacts with GTP. S91 carries the phosphoserine modification. T102 is a GTP binding site. The G3 motif stretch occupies residues 125–128 (DTPG). A G4 motif region spans residues 207-210 (AKAD). GTP is bound by residues 208–216 (KADTMTLEE), G265, and R280.

Belongs to the TRAFAC class TrmE-Era-EngA-EngB-Septin-like GTPase superfamily. Septin GTPase family. In terms of assembly, septins polymerize into heterooligomeric protein complexes that form filaments, and can associate with cellular membranes, actin filaments and microtubules. GTPase activity is required for filament formation. Post-translationally, phosphorylated by PKG on serine residues. Phosphorylated by PKG on Ser-91. Brain-specific.

Its subcellular location is the cytoplasm. The protein localises to the cytoskeleton. It is found in the synapse. Functionally, filament-forming cytoskeletal GTPase. May play a role in cytokinesis (Potential). This chain is Neuronal-specific septin-3, found in Homo sapiens (Human).